A 439-amino-acid chain; its full sequence is MARLGFGLVSCTFFLAASGLYSSSDDVIELTPSNFNREVIQSNSLWLVEFYAPWCGHCQRLTPEWKKAATALKDVVKVGAVDADKHQSLGGQYGVQGFPTIKIFGANKNKPEDYQGGRTGEAIVDAALSALRQLVKDRLSGRSGGYSSGKQGRGDSSSKKDVIELTDDTFDKNVLDSDDVWMVEFYAPWCGHCKNLEPEWATAATEVKEQTKGKVKLAAVDATVNQVLANRYGIRGFPTIKIFQKGEAPVDYDGGRTRSDIVSRALDLFSDNAPPPELLEIINEDVAKKMCEEHQLCVVAVLPHILDTGAARNSYLEILLKLADKYKKKMWGWLWTEAGAQSELENALGIGGFGYPAMARINARKMKFALLKGSFSEQGINEFLRELSFGRASTAPVGGGSFPAITAREPWDGRDGELPVEDDIDLSDVELDDLEKDEL.

Positions 1–19 are cleaved as a signal peptide; that stretch reads MARLGFGLVSCTFFLAASG. 2 consecutive Thioredoxin domains span residues 20 to 133 and 151 to 287; these read LYSS…ALRQ and QGRG…EDVA. Active-site nucleophile residues include Cys-55 and Cys-58. Cysteines 55 and 58 form a disulfide. Phosphoserine occurs at positions 129, 156, and 158. The interval 141-160 is disordered; the sequence is GRSGGYSSGKQGRGDSSSKK. Catalysis depends on nucleophile residues Cys-190 and Cys-193. A disulfide bridge links Cys-190 with Cys-193. The segment at 400–425 is disordered; it reads GSFPAITAREPWDGRDGELPVEDDID. The residue at position 427 (Ser-427) is a Phosphoserine. The Prevents secretion from ER signature appears at 436 to 439; it reads KDEL.

Belongs to the protein disulfide isomerase family. As to quaternary structure, part of a large chaperone multiprotein complex comprising DNAJB11, HSP90B1, HSPA5, HYOU, PDIA2, PDIA4, PDIA6, PPIB, SDF2L1, UGGT1 and very small amounts of ERP29, but not, or at very low levels, CALR nor CANX. Interacts with MICA on the surface of tumor cells, leading to MICA disulfide bond reduction which is required for its release from tumor cells. Interacts with ITGB3 following platelet stimulation. Interacts with ERN1; the interaction is direct. Interacts with EIF2AK3. In terms of tissue distribution, expressed most abundantly in lung and kidney, followed by heart, liver and brain.

The protein resides in the endoplasmic reticulum lumen. The protein localises to the cell membrane. It localises to the melanosome. It carries out the reaction Catalyzes the rearrangement of -S-S- bonds in proteins.. May function as a chaperone that inhibits aggregation of misfolded proteins. Negatively regulates the unfolded protein response (UPR) through binding to UPR sensors such as ERN1, which in turn inactivates ERN1 signaling. May also regulate the UPR via the EIF2AK3 UPR sensor. Plays a role in platelet aggregation and activation by agonists such as convulxin, collagen and thrombin. In Mesocricetus auratus (Golden hamster), this protein is Protein disulfide-isomerase A6 (PDIA6).